Reading from the N-terminus, the 261-residue chain is Cytochrome c oxidase subunit 3 (261 aa).

The Mitochondrial matrix segment spans residues 1-15; sequence MTHQTHAYHMVNPSP. Residues 16–34 form a helical membrane-spanning segment; sequence WPLTGALSALLMTFGLIMW. The Mitochondrial intermembrane segment spans residues 35–40; sequence FHFNST. The chain crosses the membrane as a helical span at residues 41–66; that stretch reads ALLMLGLTTNMLTMYQWWRDIIREST. Residues 67-72 are Mitochondrial matrix-facing; the sequence is FQGHHT. A helical membrane pass occupies residues 73-105; the sequence is PVVQKGLRYGMILFIISEVLFFTGFFWAFYHSS. The Mitochondrial intermembrane portion of the chain corresponds to 106–128; the sequence is LAPTPELGGCWPPTGIHPLNPLE. A helical transmembrane segment spans residues 129-152; it reads VPLLNTSVLLASGVSITWAHHSLM. At 153–155 the chain is on the mitochondrial matrix side; that stretch reads EGH. The helical transmembrane segment at 156 to 183 threads the bilayer; that stretch reads RNHMLQALFITIALGVYFTLLQASEYYE. At 184–190 the chain is on the mitochondrial intermembrane side; it reads APFTISD. A helical membrane pass occupies residues 191-223; it reads GVYGSTFFVATGFHGLHVIIGSTFLIVCFFRQL. At 224–232 the chain is on the mitochondrial matrix side; sequence KFHFTSSHH. Residues 233 to 256 form a helical membrane-spanning segment; it reads FGFEAAAWYWHFVDVVWLFLYVSI. At 257–261 the chain is on the mitochondrial intermembrane side; it reads YWWGS.

The protein belongs to the cytochrome c oxidase subunit 3 family. In terms of assembly, component of the cytochrome c oxidase (complex IV, CIV), a multisubunit enzyme composed of 14 subunits. The complex is composed of a catalytic core of 3 subunits MT-CO1, MT-CO2 and MT-CO3, encoded in the mitochondrial DNA, and 11 supernumerary subunits COX4I, COX5A, COX5B, COX6A, COX6B, COX6C, COX7A, COX7B, COX7C, COX8 and NDUFA4, which are encoded in the nuclear genome. The complex exists as a monomer or a dimer and forms supercomplexes (SCs) in the inner mitochondrial membrane with NADH-ubiquinone oxidoreductase (complex I, CI) and ubiquinol-cytochrome c oxidoreductase (cytochrome b-c1 complex, complex III, CIII), resulting in different assemblies (supercomplex SCI(1)III(2)IV(1) and megacomplex MCI(2)III(2)IV(2)).

It is found in the mitochondrion inner membrane. It catalyses the reaction 4 Fe(II)-[cytochrome c] + O2 + 8 H(+)(in) = 4 Fe(III)-[cytochrome c] + 2 H2O + 4 H(+)(out). Functionally, component of the cytochrome c oxidase, the last enzyme in the mitochondrial electron transport chain which drives oxidative phosphorylation. The respiratory chain contains 3 multisubunit complexes succinate dehydrogenase (complex II, CII), ubiquinol-cytochrome c oxidoreductase (cytochrome b-c1 complex, complex III, CIII) and cytochrome c oxidase (complex IV, CIV), that cooperate to transfer electrons derived from NADH and succinate to molecular oxygen, creating an electrochemical gradient over the inner membrane that drives transmembrane transport and the ATP synthase. Cytochrome c oxidase is the component of the respiratory chain that catalyzes the reduction of oxygen to water. Electrons originating from reduced cytochrome c in the intermembrane space (IMS) are transferred via the dinuclear copper A center (CU(A)) of subunit 2 and heme A of subunit 1 to the active site in subunit 1, a binuclear center (BNC) formed by heme A3 and copper B (CU(B)). The BNC reduces molecular oxygen to 2 water molecules using 4 electrons from cytochrome c in the IMS and 4 protons from the mitochondrial matrix. The sequence is that of Cytochrome c oxidase subunit 3 (MT-CO3) from Tragelaphus oryx (Eland).